The chain runs to 176 residues: ATP synthase subunit delta (176 aa).

Belongs to the ATPase delta chain family. In terms of assembly, F-type ATPases have 2 components, F(1) - the catalytic core - and F(0) - the membrane proton channel. F(1) has five subunits: alpha(3), beta(3), gamma(1), delta(1), epsilon(1). F(0) has three main subunits: a(1), b(2) and c(10-14). The alpha and beta chains form an alternating ring which encloses part of the gamma chain. F(1) is attached to F(0) by a central stalk formed by the gamma and epsilon chains, while a peripheral stalk is formed by the delta and b chains.

Its subcellular location is the cell inner membrane. Functionally, f(1)F(0) ATP synthase produces ATP from ADP in the presence of a proton or sodium gradient. F-type ATPases consist of two structural domains, F(1) containing the extramembraneous catalytic core and F(0) containing the membrane proton channel, linked together by a central stalk and a peripheral stalk. During catalysis, ATP synthesis in the catalytic domain of F(1) is coupled via a rotary mechanism of the central stalk subunits to proton translocation. This protein is part of the stalk that links CF(0) to CF(1). It either transmits conformational changes from CF(0) to CF(1) or is implicated in proton conduction. This is ATP synthase subunit delta from Polaromonas sp. (strain JS666 / ATCC BAA-500).